We begin with the raw amino-acid sequence, 102 residues long: Small ribosomal subunit protein uS10 (102 aa).

A disordered region spans residues 34–58; the sequence is LSGPVPLPTKTLEIPARKSPDGEGT.

Belongs to the universal ribosomal protein uS10 family. As to quaternary structure, part of the 30S ribosomal subunit.

Functionally, involved in the binding of tRNA to the ribosomes. The polypeptide is Small ribosomal subunit protein uS10 (Natronomonas pharaonis (strain ATCC 35678 / DSM 2160 / CIP 103997 / JCM 8858 / NBRC 14720 / NCIMB 2260 / Gabara) (Halobacterium pharaonis)).